The sequence spans 402 residues: Nodulation protein E (402 aa).

The Ketosynthase family 3 (KS3) domain maps to 2–401 (DRRVVITGIG…GMNAVLAFRQ (400 aa)). Residues cysteine 162, histidine 294, and histidine 331 each act as for beta-ketoacyl synthase activity in the active site. The chain crosses the membrane as a helical span at residues 329–348 (HAHCLGAASALEMIACVMAI).

Belongs to the thiolase-like superfamily. Beta-ketoacyl-ACP synthases family.

Its subcellular location is the cell inner membrane. Proposed to synthesize NOD factor fatty acyl chain. Involved in the synthesis of a highly unsaturated fatty acid moiety, which forms part of a lipo-oligosaccharide that is responsible for host specificity. The sequence is that of Nodulation protein E (nodE) from Rhizobium sp. (strain N33).